We begin with the raw amino-acid sequence, 392 residues long: Metacaspase-1 (392 aa).

Polar residues predominate over residues 1 to 14; it reads MYPGSGNYSYNNRP. Positions 1-87 are disordered; sequence MYPGSGNYSY…PSSIQQGNGQ (87 aa). Residues 41–51 are compositionally biased toward low complexity; that stretch reads QQQQYQDQYQG. Residues 53 to 63 show a composition bias toward polar residues; it reads NRGQYQGQYQD. Active-site residues include His-182 and Cys-238.

It belongs to the peptidase C14B family.

In terms of biological role, involved in cell death (apoptosis). The polypeptide is Metacaspase-1 (MCA1) (Candida glabrata (strain ATCC 2001 / BCRC 20586 / JCM 3761 / NBRC 0622 / NRRL Y-65 / CBS 138) (Yeast)).